A 134-amino-acid chain; its full sequence is Small ribosomal subunit protein bS6 (134 aa).

The segment at 99 to 134 is disordered; the sequence is PSQLAKSADEKRARKAPRSENFDNDQDDESNDDSDE. Positions 105–119 are enriched in basic and acidic residues; that stretch reads SADEKRARKAPRSEN. The span at 120–134 shows a compositional bias: acidic residues; the sequence is FDNDQDDESNDDSDE.

It belongs to the bacterial ribosomal protein bS6 family.

Its function is as follows. Binds together with bS18 to 16S ribosomal RNA. This is Small ribosomal subunit protein bS6 from Psychrobacter sp. (strain PRwf-1).